We begin with the raw amino-acid sequence, 352 residues long: Protein NDRG4 (352 aa).

A phosphoserine mark is found at lysine 293, serine 298, serine 317, and serine 323. Residues 301-352 form a disordered region; the sequence is AVPSASMTRLARSRTASLTSASSVDGSRPQPCAHSDSSEGMGQVNHTMEVSC. Low complexity predominate over residues 308-323; that stretch reads TRLARSRTASLTSASS. A compositionally biased stretch (polar residues) spans 338–352; that stretch reads SEGMGQVNHTMEVSC.

The protein belongs to the NDRG family. Predominantly expressed in the brain (at protein level). Detected in neurons of various parts of brain, including the olfactory bulb, olfactory tuberculum, cerebral cortex, striatum, hippocampus, dentate gyrus, thalamus, hypothalamus, mesencephalon, cerebellum, pons and medulla oblongata.

It is found in the cytoplasm. The protein localises to the cytosol. Functionally, contributes to the maintenance of intracerebral BDNF levels within the normal range, which is necessary for the preservation of spatial learning and the resistance to neuronal cell death caused by ischemic stress. May enhance growth factor-induced ERK1 and ERK2 phosphorylation. May attenuate NGF-promoted ELK1 phosphorylation in a microtubule-dependent manner. This is Protein NDRG4 (Ndrg4) from Mus musculus (Mouse).